Here is a 231-residue protein sequence, read N- to C-terminus: Large ribosomal subunit protein uL1 (231 aa).

This sequence belongs to the universal ribosomal protein uL1 family. In terms of assembly, part of the 50S ribosomal subunit.

Binds directly to 23S rRNA. The L1 stalk is quite mobile in the ribosome, and is involved in E site tRNA release. Functionally, protein L1 is also a translational repressor protein, it controls the translation of the L11 operon by binding to its mRNA. This Neisseria meningitidis serogroup A / serotype 4A (strain DSM 15465 / Z2491) protein is Large ribosomal subunit protein uL1.